The following is a 60-amino-acid chain: DNA-directed RNA polymerase subunit Rpo6 (60 aa).

Belongs to the archaeal Rpo6/eukaryotic RPB6 RNA polymerase subunit family. As to quaternary structure, part of the RNA polymerase complex.

It localises to the cytoplasm. The enzyme catalyses RNA(n) + a ribonucleoside 5'-triphosphate = RNA(n+1) + diphosphate. Its function is as follows. DNA-dependent RNA polymerase (RNAP) catalyzes the transcription of DNA into RNA using the four ribonucleoside triphosphates as substrates. In Picrophilus torridus (strain ATCC 700027 / DSM 9790 / JCM 10055 / NBRC 100828 / KAW 2/3), this protein is DNA-directed RNA polymerase subunit Rpo6.